Consider the following 370-residue polypeptide: Leucine-rich repeat and transmembrane domain-containing protein 2 (370 aa).

Positions 1–35 (MLAPGSSPGQRGRLALQWRQVSWITCWIALYAVEA) are cleaved as a signal peptide. Residues 36-68 (LPTCPFSCKCDSRSLEVDCSGLGLTTVPPDVPA) form the LRRNT domain. The Extracellular portion of the chain corresponds to 36–310 (LPTCPFSCKC…PASVRRAMGT (275 aa)). 5 LRR repeats span residues 69–90 (ATRT…AFAN), 93–114 (SLQR…IFGD), 117–139 (NLTE…LRHS), 141–162 (LLRH…LFDG), and 165–186 (ALRS…TFEP). Asparagine 90 carries N-linked (GlcNAc...) asparagine glycosylation. Residues asparagine 117 and asparagine 125 are each glycosylated (N-linked (GlcNAc...) asparagine). Residues 198–252 (NPWECDCNLREFKHWMEWFSYRGGRLDQLACTLPKELRGKDMRMVPMEMFNYCSQ) form the LRRCT domain. Asparagine 257 is a glycosylation site (N-linked (GlcNAc...) asparagine). The interval 261-300 (GLDIPGPPCTKASPEPAKPKPGAEPEPEPSTACPQKQRHR) is disordered. A helical membrane pass occupies residues 311-331 (VIIAGVVCGVVCIMMVVAAAY). The Cytoplasmic portion of the chain corresponds to 332 to 370 (GCIYASLMAKYHRELKKRQPLMGDPEGEHEDQKQISSVA). Residues 351 to 370 (PLMGDPEGEHEDQKQISSVA) form a disordered region.

Its subcellular location is the membrane. This is Leucine-rich repeat and transmembrane domain-containing protein 2 (LRTM2) from Homo sapiens (Human).